The primary structure comprises 98 residues: Large ribosomal subunit protein bL28 (98 aa).

Part of the 50S ribosomal subunit.

This chain is Large ribosomal subunit protein bL28 (rpmB), found in Thermus thermophilus (strain ATCC 27634 / DSM 579 / HB8).